We begin with the raw amino-acid sequence, 256 residues long: Zinc import ATP-binding protein ZnuC (256 aa).

The ABC transporter domain maps to 6–221 (IAAEGLSIRV…PEYRALFGTG (216 aa)). 38 to 45 (GPNGSGKS) is a binding site for ATP. The segment at 237–256 (HDDDCGHDHGAEHMHPHGDR) is disordered.

This sequence belongs to the ABC transporter superfamily. Zinc importer (TC 3.A.1.15.5) family. In terms of assembly, the complex is composed of two ATP-binding proteins (ZnuC), two transmembrane proteins (ZnuB) and a solute-binding protein (ZnuA).

Its subcellular location is the cell inner membrane. The catalysed reaction is Zn(2+)(out) + ATP(in) + H2O(in) = Zn(2+)(in) + ADP(in) + phosphate(in) + H(+)(in). In terms of biological role, part of the ABC transporter complex ZnuABC involved in zinc import. Responsible for energy coupling to the transport system. This chain is Zinc import ATP-binding protein ZnuC, found in Ruegeria pomeroyi (strain ATCC 700808 / DSM 15171 / DSS-3) (Silicibacter pomeroyi).